The primary structure comprises 282 residues: Sulfur carrier protein FdhD (282 aa).

C115 serves as the catalytic Cysteine persulfide intermediate.

It belongs to the FdhD family.

It is found in the cytoplasm. Required for formate dehydrogenase (FDH) activity. Acts as a sulfur carrier protein that transfers sulfur from IscS to the molybdenum cofactor prior to its insertion into FDH. The chain is Sulfur carrier protein FdhD from Streptomyces avermitilis (strain ATCC 31267 / DSM 46492 / JCM 5070 / NBRC 14893 / NCIMB 12804 / NRRL 8165 / MA-4680).